The primary structure comprises 269 residues: Orotidine 5'-phosphate decarboxylase (269 aa).

The Proton donor role is filled by K92.

Belongs to the OMP decarboxylase family. Type 2 subfamily.

The enzyme catalyses orotidine 5'-phosphate + H(+) = UMP + CO2. The protein operates within pyrimidine metabolism; UMP biosynthesis via de novo pathway; UMP from orotate: step 2/2. This is Orotidine 5'-phosphate decarboxylase from Natronomonas pharaonis (strain ATCC 35678 / DSM 2160 / CIP 103997 / JCM 8858 / NBRC 14720 / NCIMB 2260 / Gabara) (Halobacterium pharaonis).